A 297-amino-acid chain; its full sequence is Pyrroline-5-carboxylate reductase 1 (297 aa).

It belongs to the pyrroline-5-carboxylate reductase family.

Its subcellular location is the cytoplasm. It carries out the reaction L-proline + NADP(+) = (S)-1-pyrroline-5-carboxylate + NADPH + 2 H(+). The enzyme catalyses L-proline + NAD(+) = (S)-1-pyrroline-5-carboxylate + NADH + 2 H(+). Its pathway is amino-acid biosynthesis; L-proline biosynthesis; L-proline from L-glutamate 5-semialdehyde: step 1/1. Its function is as follows. Catalyzes the reduction of 1-pyrroline-5-carboxylate (PCA) to L-proline. The protein is Pyrroline-5-carboxylate reductase 1 (proH) of Bacillus spizizenii (strain ATCC 23059 / NRRL B-14472 / W23) (Bacillus subtilis subsp. spizizenii).